We begin with the raw amino-acid sequence, 568 residues long: General O-oligosaccharyltransferase (568 aa).

Helical transmembrane passes span 17 to 37 (VAVMRFLLLLLTAVLISLAWL), 46 to 66 (LTFASEMLSFAAFLSLLALFL), 78 to 98 (LALPVVFIPMIQWGFGLVVDF), 101 to 121 (ALLSSAYLLGFWLTMLLGYNL), 132 to 152 (FTLSSYLLFAVALLTSLIACI), 176 to 196 (FAQPNNMSTFLILGLLGCLYL), 214 to 234 (IVFAITLSQSRTAWVFGLFFI), 251 to 271 (YAVLLWAIGFFAVGLLFPRFT), 349 to 369 (LLVWNGWLLGGLITICILIWI), 376 to 396 (AKTTESIIACLMVSAVWIHTL), 397 to 417 (LEYPLQYAYFLLPVGFLMGLI), and 429 to 449 (VPVSVIRSIWVIGIMLLALIW).

The protein belongs to the PglL O-oligosaccharyltransferase family.

The protein localises to the cell membrane. In terms of biological role, catalyzes the O-glycosylation of multiple protein targets. Is responsible for general protein glycosylation within A.baylyi ADP1. Does not act as an O-antigen ligase. In Acinetobacter baylyi (strain ATCC 33305 / BD413 / ADP1), this protein is General O-oligosaccharyltransferase.